The following is a 518-amino-acid chain: Subtilisin-like protease 1 (518 aa).

The signal sequence occupies residues 1–19; sequence MGVFRFISISLAAVSAANA. A propeptide spanning residues 20 to 116 is cleaved from the precursor; the sequence is AQILSMPHAQ…VEPDTIISVH (97 aa). The Inhibitor I9 domain maps to 34–115; it reads SYIVMMKDDT…FVEPDTIISV (82 aa). Positions 126–400 constitute a Peptidase S8 domain; the sequence is SWGLARISNP…NVLINNGGAK (275 aa). Active-site charge relay system residues include Asp158 and His190. Residues 175 to 198 are disordered; it reads GSNQVNDGDDRDGSGHGTHTSGTM. N-linked (GlcNAc...) asparagine glycans are attached at residues Asn233 and Asn251. Residues 282–294 show a composition bias toward polar residues; that stretch reads NDNQDAQSSSPAS. The segment at 282-312 is disordered; that stretch reads NDNQDAQSSSPASEPSVCTVGSSAEDDSRSS. The active-site Charge relay system is the Ser345. Positions 378–394 are enriched in polar residues; that stretch reads TSSITDAGPGTPTNVLI. The segment at 378–496 is disordered; that stretch reads TSSITDAGPG…PYPGGDNFDF (119 aa). 2 stretches are compositionally biased toward pro residues: residues 405 to 470 and 478 to 487; these read NPNP…PGEP and APAPQHPHTP.

This sequence belongs to the peptidase S8 family.

Its subcellular location is the secreted. Secreted subtilisin-like serine protease with keratinolytic activity that contributes to pathogenicity. The sequence is that of Subtilisin-like protease 1 (SUB1) from Trichophyton verrucosum (strain HKI 0517).